A 488-amino-acid chain; its full sequence is Kynurenine 3-monooxygenase 2 (488 aa).

This sequence belongs to the aromatic-ring hydroxylase family. KMO subfamily. Requires FAD as cofactor.

Its subcellular location is the mitochondrion outer membrane. It catalyses the reaction L-kynurenine + NADPH + O2 + H(+) = 3-hydroxy-L-kynurenine + NADP(+) + H2O. Its pathway is cofactor biosynthesis; NAD(+) biosynthesis; quinolinate from L-kynurenine: step 1/3. Catalyzes the hydroxylation of L-kynurenine (L-Kyn) to form 3-hydroxy-L-kynurenine (L-3OHKyn). Required for synthesis of quinolinic acid. This chain is Kynurenine 3-monooxygenase 2 (bna4-2), found in Aspergillus niger (strain ATCC MYA-4892 / CBS 513.88 / FGSC A1513).